A 720-amino-acid polypeptide reads, in one-letter code: DNA replication licensing factor mcm7 (720 aa).

The C4-type zinc-finger motif lies at 183–210 (CDQCGAETYQPIQSPTFMPLIMCPSREC). An MCM domain is found at 331–537 (FYEKLAASIA…NDLRLAQHIT (207 aa)). Tyr-344, Gly-383, Ala-385, Lys-386, Ser-387, Asn-488, Arg-513, and Arg-603 together coordinate ATP. An Arginine finger motif is present at residues 512-515 (SRFD).

This sequence belongs to the MCM family. As to quaternary structure, component of the mcm2-7 complex (RLF-M). The complex forms a toroidal hexameric ring with the proposed subunit order mcm2-mcm6-mcm4-mcm7-mcm3-mcm5. The heterodimer of mmcm3/mcm5 interacts with mcm4, mmcm6, mcm7 and weakly with mcm2. The N-terminus is required for interaction with mmcm3, though this interaction may not be direct, and remains in a complex with mmcm3 throughout the cell cycle. Begins to associate with zmcm6 at the neurula stage. Component of the replisome complex. Component of the CMG helicase complex, composed of the mcm2-7 complex, the GINS complex and cdc45. Post-translationally, ubiquitinated by traip when forks converge following formation of DNA interstrand cross-links. Short ubiquitin chains on mcm7 promote recruitment of DNA glycosylase neil3. If the interstrand cross-link cannot be cleaved by neil3, the ubiquitin chains continue to grow on mcm7, promoting the unloading of the CMG helicase complex by the vcp/p97 ATPase.

The protein resides in the nucleus. It is found in the chromosome. It carries out the reaction ATP + H2O = ADP + phosphate + H(+). Functionally, acts as a component of the mcm2-7 complex (mcm complex) which is the putative replicative helicase essential for 'once per cell cycle' DNA replication initiation and elongation in eukaryotic cells. The active ATPase sites in the mcm2-7 ring are formed through the interaction surfaces of two neighboring subunits such that a critical structure of a conserved arginine finger motif is provided in trans relative to the ATP-binding site of the Walker A box of the adjacent subunit. The six ATPase active sites, however, are likely to contribute differentially to the complex helicase activity. The existence of maternal and zygotic forms of mcm3 and mcm6 suggests that specific forms of mcm2-7 complexes may be used during different stages of development. The polypeptide is DNA replication licensing factor mcm7 (Xenopus tropicalis (Western clawed frog)).